Consider the following 108-residue polypeptide: Nucleoid-associated protein Csal_1459 (108 aa).

Positions 84–93 (EETSRGRMEE) are enriched in basic and acidic residues. The segment at 84–108 (EETSRGRMEEATEGMNLPPGFKMPF) is disordered.

This sequence belongs to the YbaB/EbfC family. Homodimer.

Its subcellular location is the cytoplasm. It localises to the nucleoid. Its function is as follows. Binds to DNA and alters its conformation. May be involved in regulation of gene expression, nucleoid organization and DNA protection. This chain is Nucleoid-associated protein Csal_1459, found in Chromohalobacter salexigens (strain ATCC BAA-138 / DSM 3043 / CIP 106854 / NCIMB 13768 / 1H11).